Here is a 119-residue protein sequence, read N- to C-terminus: uncharacterized protein (119 aa).

4 helical membrane passes run 3–23 (WVFL…MKLS), 29–49 (LIPS…LTLT), 58–78 (AYAV…FLFF), and 87–107 (VISI…EHVA).

It belongs to the drug/metabolite transporter (DMT) superfamily. Small multidrug resistance (SMR) (TC 2.A.7.1) family.

Its subcellular location is the cell membrane. This is an uncharacterized protein from Bacillus subtilis (strain 168).